We begin with the raw amino-acid sequence, 210 residues long: MSSLFITATGTNVGKTHTTLKLLDALAAKGRSVGVFKPIETGVLDSAPDATILLESCRKVNRNFEGLKTEDITAYTFPLPAAPFCADTNHKIRIDRILEKYHQLSQLCDILLVEGAGGLMVPVTRDFFMIDLIKELQTRVLLVTPGRLGCINDTLLSMEALKSRNIAFDWCINLYEDAESFTEVTQPFYDAVFPAWWSDKEGMEKFARSL.

12-17 (NVGKTH) provides a ligand contact to ATP. Threonine 16 contacts Mg(2+). Residue lysine 37 is part of the active site. Residue threonine 41 coordinates substrate. Glutamate 114 provides a ligand contact to Mg(2+). 114-117 (EGAG) serves as a coordination point for ATP.

The protein belongs to the dethiobiotin synthetase family. As to quaternary structure, homodimer. Requires Mg(2+) as cofactor.

Its subcellular location is the cytoplasm. It catalyses the reaction (7R,8S)-7,8-diammoniononanoate + CO2 + ATP = (4R,5S)-dethiobiotin + ADP + phosphate + 3 H(+). Its pathway is cofactor biosynthesis; biotin biosynthesis; biotin from 7,8-diaminononanoate: step 1/2. Catalyzes a mechanistically unusual reaction, the ATP-dependent insertion of CO2 between the N7 and N8 nitrogen atoms of 7,8-diaminopelargonic acid (DAPA, also called 7,8-diammoniononanoate) to form a ureido ring. In Sulfurovum sp. (strain NBC37-1), this protein is ATP-dependent dethiobiotin synthetase BioD.